A 589-amino-acid polypeptide reads, in one-letter code: Putative sphingomyelin phosphodiesterase asm-3 (589 aa).

An N-terminal signal peptide occupies residues 1–17; the sequence is MLLGLLVLSLAFQGTLA. In terms of domain architecture, Saposin B-type spans 18-101; that stretch reads VTECEECKSI…LMKNDCGDFV (84 aa). Intrachain disulfides connect cysteine 21/cysteine 97, cysteine 24/cysteine 89, and cysteine 52/cysteine 63. N-linked (GlcNAc...) asparagine glycosylation occurs at asparagine 109. Zn(2+)-binding residues include aspartate 139 and histidine 141. 2 disulfide bridges follow: cysteine 154–cysteine 159 and cysteine 160–cysteine 188. Aspartate 217 serves as a coordination point for Zn(2+). A glycan (N-linked (GlcNAc...) asparagine) is linked at asparagine 237. Zn(2+) is bound at residue asparagine 257. Asparagine 334 carries N-linked (GlcNAc...) asparagine glycosylation. Histidine 364, histidine 398, and histidine 400 together coordinate Zn(2+). Asparagine 463 carries an N-linked (GlcNAc...) asparagine glycan. Intrachain disulfides connect cysteine 530–cysteine 535 and cysteine 541–cysteine 553. A disordered region spans residues 562–589; sequence KPEPKKNKYSARFATSNERRRGKEECKI. Over residues 578–589 the composition is skewed to basic and acidic residues; sequence NERRRGKEECKI.

It belongs to the acid sphingomyelinase family. Zn(2+) is required as a cofactor.

It is found in the secreted. It carries out the reaction an N-(acyl)-sphingosylphosphocholine + H2O = an N-acyl-sphingoid base + phosphocholine + H(+). The catalysed reaction is a sphingomyelin + H2O = phosphocholine + an N-acylsphing-4-enine + H(+). The enzyme catalyses an N-acyl-15-methylhexadecasphing-4-enine-1-phosphocholine + H2O = an N-acyl-15-methylhexadecasphing-4-enine + phosphocholine + H(+). The protein operates within lipid metabolism; sphingolipid metabolism. Functionally, converts sphingomyelin to ceramide (N-acyl-sphingoid base) and phosphocholine. C.elegans contain specific sphingoid bases, which are unique or different in structure compared to the sphingoid bases found in other animals. Two examples of these distinctive compounds are: 15-methylhexadecasphinganine and 15-methylhexadecasphing-4-enine. This Caenorhabditis elegans protein is Putative sphingomyelin phosphodiesterase asm-3 (asm-3).